Consider the following 311-residue polypeptide: Methionyl-tRNA formyltransferase (311 aa).

112–115 (SLLP) provides a ligand contact to (6S)-5,6,7,8-tetrahydrofolate.

This sequence belongs to the Fmt family.

The enzyme catalyses L-methionyl-tRNA(fMet) + (6R)-10-formyltetrahydrofolate = N-formyl-L-methionyl-tRNA(fMet) + (6S)-5,6,7,8-tetrahydrofolate + H(+). Attaches a formyl group to the free amino group of methionyl-tRNA(fMet). The formyl group appears to play a dual role in the initiator identity of N-formylmethionyl-tRNA by promoting its recognition by IF2 and preventing the misappropriation of this tRNA by the elongation apparatus. In Agrobacterium fabrum (strain C58 / ATCC 33970) (Agrobacterium tumefaciens (strain C58)), this protein is Methionyl-tRNA formyltransferase.